The following is a 409-amino-acid chain: Probable type I inositol 1,4,5-trisphosphate 5-phosphatase (409 aa).

It belongs to the inositol 1,4,5-trisphosphate 5-phosphatase type I family.

The catalysed reaction is 1D-myo-inositol 1,4,5-trisphosphate + H2O = 1D-myo-inositol 1,4-bisphosphate + phosphate. It catalyses the reaction 1D-myo-inositol 1,3,4,5-tetrakisphosphate + H2O = 1D-myo-inositol 1,3,4-trisphosphate + phosphate. This chain is Probable type I inositol 1,4,5-trisphosphate 5-phosphatase (ipp-5), found in Caenorhabditis elegans.